Consider the following 213-residue polypeptide: Amelotin (213 aa).

An N-terminal signal peptide occupies residues Met-1–Ser-16. 2 disordered regions span residues Asn-22–Gln-43 and Gly-162–Gln-213. Over residues Thr-33–Gln-43 the composition is skewed to polar residues. A compositionally biased stretch (low complexity) spans Gly-169–Val-180.

It belongs to the amelotin family. In terms of processing, phosphorylated by FAM20C in vitro. O-glycosylated. As to expression, specifically expressed in maturation-stage ameloblasts.

The protein localises to the secreted. Is a promoter of calcium phosphate mineralization, playing a critical role in the formation of the compact, mineralized, aprismatic enamel surface layer during the maturation stage of amelogenesis. The polypeptide is Amelotin (Amtn) (Mus musculus (Mouse)).